Here is a 254-residue protein sequence, read N- to C-terminus: Short-chain dehydrogenase/reductase SDRA (254 aa).

Residue 15–39 coordinates NADP(+); sequence IVTASTQGIGFGITERFGLEGASVV. Residue Ser146 coordinates substrate. The active-site Proton acceptor is Tyr159. Residues 252–254 carry the Microbody targeting signal motif; sequence SRL.

Belongs to the short-chain dehydrogenases/reductases (SDR) family.

It localises to the peroxisome. Its function is as follows. Involved with IBR3 and IBR10 in the peroxisomal beta-oxidation of indole-3-butyric acid (IBA) to form indole-3-acetic acid (IAA), a biologically active auxin. May be responsible for catalyzing the dehydrogenation step in the conversion of IBA. May be involved in the peroxisomal activation of 2,4-dichlorophenoxybutyric acid (2,4-DB), a precursor of active auxins that inhibit root growth. This Arabidopsis thaliana (Mouse-ear cress) protein is Short-chain dehydrogenase/reductase SDRA.